Here is a 325-residue protein sequence, read N- to C-terminus: uncharacterized protein (325 aa).

The HD domain occupies 49–151; sequence RYEHSIGVML…ELCADRTDYT (103 aa).

This is an uncharacterized protein from Bacillus subtilis (strain 168).